The primary structure comprises 106 residues: MMKVLVVVALLVTLISYSSSEGIDDLETDELLSLMANEQTRAKACTPRYYDCSHDRHSCCRSSMFKDVCTCFYPEGGDNKEVCTCQQPKHLKYMEKATDKIKNLFG.

A signal peptide spans 1-20; that stretch reads MMKVLVVVALLVTLISYSSS. A propeptide spanning residues 21-41 is cleaved from the precursor; that stretch reads EGIDDLETDELLSLMANEQTR. Disulfide bonds link C45–C60, C52–C69, C59–C85, and C71–C83.

Belongs to the neurotoxin 19 (CSTX) family. 02 (D7) subfamily. In terms of tissue distribution, expressed by the venom gland.

The protein resides in the secreted. This is Toxin-like structure LSTX-D5 from Lycosa singoriensis (Wolf spider).